A 626-amino-acid polypeptide reads, in one-letter code: Chaperone protein DnaK (626 aa).

Residue Thr175 is modified to Phosphothreonine; by autocatalysis. A compositionally biased stretch (low complexity) spans 586–606 (GAEGAAAGADGAGASAGSASG). The tract at residues 586–626 (GAEGAAAGADGAGASAGSASGSDDDTVEAEVVDDDDDKDNK) is disordered. The segment covering 607–626 (SDDDTVEAEVVDDDDDKDNK) has biased composition (acidic residues).

This sequence belongs to the heat shock protein 70 family.

Functionally, acts as a chaperone. This Bifidobacterium longum (strain DJO10A) protein is Chaperone protein DnaK.